A 512-amino-acid polypeptide reads, in one-letter code: Pantetheinase (512 aa).

The N-terminal stretch at M1–S23 is a signal peptide. The CN hydrolase domain maps to Y32–S308. The active-site Proton acceptor is the E81. Residues N132 and N148 are each glycosylated (N-linked (GlcNAc...) asparagine). Catalysis depends on K180, which acts as the Proton donor. The active-site Nucleophile is C213. 2 N-linked (GlcNAc...) asparagine glycosylation sites follow: N316 and N354. A lipid anchor (GPI-anchor amidated asparagine) is attached at N488. The propeptide at A489 to C512 is removed in mature form.

Belongs to the carbon-nitrogen hydrolase superfamily. BTD/VNN family. As to quaternary structure, monomer. In terms of processing, N-glycosylated. As to expression, detected in kidney (at protein level). Ubiquitous.

The protein localises to the cell membrane. The enzyme catalyses (R)-pantetheine + H2O = cysteamine + (R)-pantothenate. Its function is as follows. Amidohydrolase that hydrolyzes specifically one of the carboamide linkages in D-pantetheine thus recycling pantothenic acid (vitamin B5) and releasing cysteamine. This is Pantetheinase (Vnn1) from Mus musculus (Mouse).